A 462-amino-acid chain; its full sequence is 3-isopropylmalate dehydratase large subunit (462 aa).

Residues Cys-337, Cys-397, and Cys-400 each contribute to the [4Fe-4S] cluster site.

It belongs to the aconitase/IPM isomerase family. LeuC type 1 subfamily. As to quaternary structure, heterodimer of LeuC and LeuD. [4Fe-4S] cluster serves as cofactor.

The catalysed reaction is (2R,3S)-3-isopropylmalate = (2S)-2-isopropylmalate. It functions in the pathway amino-acid biosynthesis; L-leucine biosynthesis; L-leucine from 3-methyl-2-oxobutanoate: step 2/4. In terms of biological role, catalyzes the isomerization between 2-isopropylmalate and 3-isopropylmalate, via the formation of 2-isopropylmaleate. The sequence is that of 3-isopropylmalate dehydratase large subunit from Listeria monocytogenes serovar 1/2a (strain ATCC BAA-679 / EGD-e).